The chain runs to 422 residues: Replication factor C large subunit (422 aa).

63–70 (GPPGVGKT) lines the ATP pocket.

Belongs to the activator 1 small subunits family. RfcL subfamily. In terms of assembly, heteromultimer composed of small subunits (RfcS) and large subunits (RfcL).

In terms of biological role, part of the RFC clamp loader complex which loads the PCNA sliding clamp onto DNA. This chain is Replication factor C large subunit, found in Pyrobaculum arsenaticum (strain DSM 13514 / JCM 11321 / PZ6).